The following is an 880-amino-acid chain: MKELTSSQVRQMYLDFFKSKGHSVEPSASLVPVNDPTLLWINSGVATLKKYFDGSVVPENPRITNAQKSIRTNDIENVGKTARHHTMFEMLGNFSIGDYFKNEAIHWAWEFLTGAEWLAFDPEKLYVTVYPKDTEAKRIWRDEVGLSEDHIIDVEDNFWDIGAGPSGPDTEIFYDRGEEFLDIPEDDPENYPGGENERYLEIWNLVFSEFNHTPEDTYEPLPHKNIDTGMGLERVVSIIQDAPTNFETDLFMPIIHAVEALGTNVKYGDAPQTDVSFKVIADHIRALSFAIGDGALPSNEGRGYVLRRLLRRAVMHGKKLGINEAFLYKLVPVVGEIMVSYYPEVLQQKDFIEKVVRTEEERFHETINEGLSMLNEVIKEVKDAKGDTLDGKIIFKLYDTFGFPVELTEEVAEDEGLKVDHAGFETEMEAQRERARSARSKETSMGVQSALLTDIKVESKFVGYTELTHDSELFVIIQGDALVNEASAGTAELIFAETPFYAEMGGQIADRGYVKNTAGEVVANVVDVKKAPNGQFLHKVEVLAPLAEGQIYQLQVDERMRTRILKNHTATHLLHRALKDVLGEHANQAGSLVAPGHLRFDFTHFGQVTSEELARMEAIVNEKIWEAIPVVTIETDIDTAKNMGAMALFGEKYGKEVRVVNIGDYSIELCGGTHVANTEDIGIFKIVSESGIGAGVRRIEAVTSKEAYQLLQEEERQLKEIATLVKSPQLKEVVTKTEQLQQQLRDLQKENEQLAGKLANQQAGDIFKDVKDINGVRYIAAQVNVKDMNQLRQLADQWKQKELSDVLVLATAQDEKVSLLAAMTKDMNGKGLKAGDLIKAIAPKVGGGGGGRPDMAQAGGKNPAGIADALAEVENWLANA.

Positions 568, 572, 670, and 674 each coordinate Zn(2+).

This sequence belongs to the class-II aminoacyl-tRNA synthetase family. Zn(2+) is required as a cofactor.

The protein localises to the cytoplasm. It carries out the reaction tRNA(Ala) + L-alanine + ATP = L-alanyl-tRNA(Ala) + AMP + diphosphate. Its function is as follows. Catalyzes the attachment of alanine to tRNA(Ala) in a two-step reaction: alanine is first activated by ATP to form Ala-AMP and then transferred to the acceptor end of tRNA(Ala). Also edits incorrectly charged Ser-tRNA(Ala) and Gly-tRNA(Ala) via its editing domain. In Enterococcus faecalis (strain ATCC 700802 / V583), this protein is Alanine--tRNA ligase.